The following is a 374-amino-acid chain: Chaperone protein DnaJ (374 aa).

The 66-residue stretch at 5 to 70 (DYYDVLGVAK…DKRAAYDRFG (66 aa)) folds into the J domain. The segment at 131-209 (GCEEKIRIPT…CHGQGRVQEY (79 aa)) adopts a CR-type zinc-finger fold. Residues cysteine 144, cysteine 147, cysteine 161, cysteine 164, cysteine 183, cysteine 186, cysteine 197, and cysteine 200 each contribute to the Zn(2+) site. CXXCXGXG motif repeat units lie at residues 144–151 (CKTCDGSG), 161–168 (CGTCGGAG), 183–190 (CPECHGAG), and 197–204 (CRDCHGQG).

This sequence belongs to the DnaJ family. Homodimer. Zn(2+) is required as a cofactor.

Its subcellular location is the cytoplasm. In terms of biological role, participates actively in the response to hyperosmotic and heat shock by preventing the aggregation of stress-denatured proteins and by disaggregating proteins, also in an autonomous, DnaK-independent fashion. Unfolded proteins bind initially to DnaJ; upon interaction with the DnaJ-bound protein, DnaK hydrolyzes its bound ATP, resulting in the formation of a stable complex. GrpE releases ADP from DnaK; ATP binding to DnaK triggers the release of the substrate protein, thus completing the reaction cycle. Several rounds of ATP-dependent interactions between DnaJ, DnaK and GrpE are required for fully efficient folding. Also involved, together with DnaK and GrpE, in the DNA replication of plasmids through activation of initiation proteins. The protein is Chaperone protein DnaJ of Marinomonas sp. (strain MWYL1).